Reading from the N-terminus, the 482-residue chain is Long chain base biosynthesis protein 1 (482 aa).

Residues 32–52 form a helical membrane-spanning segment; sequence VPIRGHFFVEGLLGVVIIILL.

It belongs to the class-II pyridoxal-phosphate-dependent aminotransferase family. As to quaternary structure, heterodimer with LCB2 (LCB2a or LCB2b). Component of the serine palmitoyltransferase (SPT) complex, composed of LCB1 and LCB2 (LCB2a or LCB2b). It depends on pyridoxal 5'-phosphate as a cofactor. Ubiquitous.

It is found in the endoplasmic reticulum membrane. The catalysed reaction is L-serine + hexadecanoyl-CoA + H(+) = 3-oxosphinganine + CO2 + CoA. The protein operates within lipid metabolism; sphingolipid metabolism. Functionally, component of serine palmitoyltransferase (SPT), which catalyzes the committed step in the synthesis of sphingolipids, the condensation of serine with palmitoyl CoA to form the long chain base 3-ketosphinganine. The heterodimer formed with LCB2 constitutes the catalytic core. Involved in the regulation of the programmed cell death (PCD) signaling pathway. Plays an important role during male gametogenesis and embryogenesis. The protein is Long chain base biosynthesis protein 1 (LCB1) of Arabidopsis thaliana (Mouse-ear cress).